Consider the following 588-residue polypeptide: Phosphatidylinositol-3,5-bisphosphate 3-phosphatase mtm-1 (588 aa).

Residues 20-91 (IQESIDLKLL…GQVSRIEKVG (72 aa)) enclose the GRAM domain. The Myotubularin phosphatase domain occupies 164 to 543 (GWKIYSAEKE…CGLHVWIDYY (380 aa)). Positions 293, 316, and 317 each coordinate a 1,2-diacyl-sn-glycero-3-phospho-(1D-myo-inositol-3,5-bisphosphate). A 1,2-diacyl-sn-glycero-3-phospho-(1D-myo-inositol-3-phosphate) is bound by residues asparagine 293, asparagine 316, and isoleucine 317. Cysteine 378 acts as the Phosphocysteine intermediate in catalysis. Positions 379, 380, 381, 382, 383, 384, 420, and 424 each coordinate a 1,2-diacyl-sn-glycero-3-phospho-(1D-myo-inositol-3,5-bisphosphate). Residues serine 379, aspartate 380, glycine 381, tryptophan 382, aspartate 383, and arginine 384 each coordinate a 1,2-diacyl-sn-glycero-3-phospho-(1D-myo-inositol-3-phosphate). Serine 379 is a binding site for phosphate. Phosphate is bound by residues glycine 381, tryptophan 382, aspartate 383, and arginine 384. Arginine 424 contacts a 1,2-diacyl-sn-glycero-3-phospho-(1D-myo-inositol-3-phosphate). Residues 563-588 (AQFVDEKKQLLDEIMALDDAAQKLTA) are a coiled coil.

Belongs to the protein-tyrosine phosphatase family. Non-receptor class myotubularin subfamily. Expressed in embryo, larva and in adults. Expressed in a few head and tail neurons. Expressed in hypodermis, body wall and pharyngeal muscles, sheath cells, vulva, distal tip cells and coelomocytes.

The protein resides in the cell membrane. It localises to the cell projection. Its subcellular location is the phagocytic cup. The protein localises to the apical cell membrane. It is found in the cytoplasmic granule membrane. The enzyme catalyses a 1,2-diacyl-sn-glycero-3-phospho-(1D-myo-inositol-3,5-bisphosphate) + H2O = a 1,2-diacyl-sn-glycero-3-phospho-(1D-myo-inositol-5-phosphate) + phosphate. The catalysed reaction is a 1,2-diacyl-sn-glycero-3-phospho-(1D-myo-inositol-3-phosphate) + H2O = a 1,2-diacyl-sn-glycero-3-phospho-(1D-myo-inositol) + phosphate. It carries out the reaction 1,2-dioctanoyl-sn-glycero-3-phospho-(1-D-myo-inositol-3-phosphate) + H2O = 1,2-dioctanoyl-sn-glycero-3-phospho-(1D-myo-inositol) + phosphate. Its function is as follows. Lipid phosphatase that specifically dephosphorylates phosphatidylinositol 3-phosphate (PI3P) and phosphatidylinositol 3,5-bisphosphate (PI(3,5)P2). Negatively regulates accumulation of PI3P on intracellular vesicles. Negatively regulates phagocytosis of apoptotic cells probably by limiting the recruitment and/or the activation of ced-5, ced-2 and ced-12 complex. In addition, may positively regulate phagosome maturation by promoting recycling of apoptotic receptor ced-1 back to the plasma membrane. Essential for embryonic and larval development. May promote migration of distal tip cells. The polypeptide is Phosphatidylinositol-3,5-bisphosphate 3-phosphatase mtm-1 (Caenorhabditis elegans).